Consider the following 95-residue polypeptide: Sec-independent protein translocase protein TatA (95 aa).

Residues 1–21 (MGSMSVWHWVIVAVVVMLLFG) traverse the membrane as a helical segment. The disordered stretch occupies residues 42–95 (GMADDETQPNTATSVPPVGPNDPVRTLPHQGAPGTAPQPPHVQPHVPAGDHKAV).

It belongs to the TatA/E family. As to quaternary structure, the Tat system comprises two distinct complexes: a TatABC complex, containing multiple copies of TatA, TatB and TatC subunits, and a separate TatA complex, containing only TatA subunits. Substrates initially bind to the TatABC complex, which probably triggers association of the separate TatA complex to form the active translocon.

The protein resides in the cell inner membrane. Part of the twin-arginine translocation (Tat) system that transports large folded proteins containing a characteristic twin-arginine motif in their signal peptide across membranes. TatA could form the protein-conducting channel of the Tat system. In Methylorubrum extorquens (strain PA1) (Methylobacterium extorquens), this protein is Sec-independent protein translocase protein TatA.